We begin with the raw amino-acid sequence, 298 residues long: Pyridoxal kinase PdxY (298 aa).

Position 17 (serine 17) interacts with substrate. The ATP site is built by aspartate 119 and glutamate 156. Residue aspartate 234 coordinates substrate.

The protein belongs to the pyridoxine kinase family. PdxY subfamily. Homodimer. It depends on Mg(2+) as a cofactor.

The catalysed reaction is pyridoxal + ATP = pyridoxal 5'-phosphate + ADP + H(+). The protein operates within cofactor metabolism; pyridoxal 5'-phosphate salvage; pyridoxal 5'-phosphate from pyridoxal: step 1/1. Pyridoxal kinase involved in the salvage pathway of pyridoxal 5'-phosphate (PLP). Catalyzes the phosphorylation of pyridoxal to PLP. This Deinococcus radiodurans (strain ATCC 13939 / DSM 20539 / JCM 16871 / CCUG 27074 / LMG 4051 / NBRC 15346 / NCIMB 9279 / VKM B-1422 / R1) protein is Pyridoxal kinase PdxY.